A 676-amino-acid polypeptide reads, in one-letter code: RNA helicase NPH-II (676 aa).

The Helicase ATP-binding domain occupies 172–347; sequence FSAWISHRPV…VFLPNPAFIH (176 aa). An ATP-binding site is contributed by 185–192; it reads GGTGVGKT. The DEXH box motif lies at 296–299; that stretch reads DEVH. In terms of domain architecture, Helicase C-terminal spans 366–535; that stretch reads NPSSRMAYIE…NYILYANKFN (170 aa).

It belongs to the DEAD box helicase family. DEAH subfamily. In terms of assembly, monomer.

The protein localises to the virion. The enzyme catalyses ATP + H2O = ADP + phosphate + H(+). Functionally, NTP-dependent helicase that catalyzes unidirectional unwinding of 3'tailed duplex RNAs and plays an important role during transcription of early mRNAs, presumably by preventing R-loop formation behind the elongating RNA polymerase. Might also play a role in the export of newly synthesized mRNA chains out of the core into the cytoplasm. Required for replication and propagation of viral particles. The polypeptide is RNA helicase NPH-II (OPG084) (Homo sapiens (Human)).